Reading from the N-terminus, the 313-residue chain is tRNA dimethylallyltransferase (313 aa).

11–18 serves as a coordination point for ATP; sequence GPTASGKT. A substrate-binding site is contributed by 13–18; sequence TASGKT. Interaction with substrate tRNA regions lie at residues 36-39 and 160-164; these read DSRQ and QRLIR.

Belongs to the IPP transferase family. Monomer. It depends on Mg(2+) as a cofactor.

The enzyme catalyses adenosine(37) in tRNA + dimethylallyl diphosphate = N(6)-dimethylallyladenosine(37) in tRNA + diphosphate. In terms of biological role, catalyzes the transfer of a dimethylallyl group onto the adenine at position 37 in tRNAs that read codons beginning with uridine, leading to the formation of N6-(dimethylallyl)adenosine (i(6)A). In Chlorobaculum parvum (strain DSM 263 / NCIMB 8327) (Chlorobium vibrioforme subsp. thiosulfatophilum), this protein is tRNA dimethylallyltransferase.